We begin with the raw amino-acid sequence, 577 residues long: Arginine--tRNA ligase (577 aa).

Residues Pro122–His132 carry the 'HIGH' region motif.

Belongs to the class-I aminoacyl-tRNA synthetase family. As to quaternary structure, monomer.

It localises to the cytoplasm. The catalysed reaction is tRNA(Arg) + L-arginine + ATP = L-arginyl-tRNA(Arg) + AMP + diphosphate. This is Arginine--tRNA ligase from Enterobacter sp. (strain 638).